Reading from the N-terminus, the 227-residue chain is Endo-1,4-beta-xylanase 2 (227 aa).

The first 36 residues, methionine 1–arginine 36, serve as a signal peptide directing secretion. Asparagine 29 carries an N-linked (GlcNAc...) asparagine glycan. A GH11 domain is found at glutamine 37–glutamine 225. Residue glutamate 121 is the Nucleophile of the active site. Glutamate 212 serves as the catalytic Proton donor.

It belongs to the glycosyl hydrolase 11 (cellulase G) family.

The protein localises to the secreted. It carries out the reaction Endohydrolysis of (1-&gt;4)-beta-D-xylosidic linkages in xylans.. It participates in glycan degradation; xylan degradation. In terms of biological role, endo-1,4-beta-xylanase involved in the hydrolysis of xylan, a major structural heterogeneous polysaccharide found in plant biomass representing the second most abundant polysaccharide in the biosphere, after cellulose. The chain is Endo-1,4-beta-xylanase 2 (xyn2) from Humicola insolens (Soft-rot fungus).